The following is a 102-amino-acid chain: Spexin prohormone 1 (102 aa).

Positions 1-26 are cleaved as a signal peptide; sequence MKDLRTLAAYALALLLLATFVSYSRS. The propeptide occupies 27–35; that stretch reads APMGSFQRR. Residue Q49 is modified to Glutamine amide. Residues 50-102 constitute a propeptide that is removed on maturation; that stretch reads GRRFVSEDRNEGDLYDTIRLESQSQNTENLSISKAAAFLLNVLQQARDEGEPY.

It belongs to the spexin family. As to expression, expressed in the anterior hypothalamus, ventromedial thalamic nucleus and medial longitudinal fasciculus of the brain (at protein level). Widely expressed. Expressed predominantly in the spleen, kidney, liver and testis. Expressed in olfactory bulb, pituitary, telencephalon, diencephalons, spinal cord, optic tectum, cerebellum and hypothalamus of the brain.

The protein resides in the secreted. Its subcellular location is the extracellular space. It localises to the cytoplasmic vesicle. It is found in the secretory vesicle. In terms of biological role, plays a role in the regulation of food intake and body weight and in reproduction. May also play a role as a central modulator of cardiovascular and renal function and nociception. Functionally, brain administration of the peptide inhibits food consumption. May function as a satiety factor for feeding control. Involved in the negative regulation of the reproductive axis by inhibiting luteinizing hormone secretion from pituitary cells. The polypeptide is Spexin prohormone 1 (spx) (Carassius auratus (Goldfish)).